An 838-amino-acid chain; its full sequence is U1 SNP1-associating protein 1 (838 aa).

Residues 1–536 are Cytoplasmic-facing; it reads MSEYLAQTPC…VRPLRNSFPL (536 aa). Positions 31 to 240 are required for ERAD-L function; that stretch reads HPLSTVGRLL…DFAPAHNSFF (210 aa). The region spanning 259–318 is the Ubiquitin-like domain; sequence ERFVLEFISDATLSITQMNVKPDTTVKQVKDFICSVYTHSLNLRRNDIKLIYKGQLLHEN. Residues 319 to 418 are important for HRD1 oligomer formation; sequence NFAGNSSKIS…VPTDELYRKC (100 aa). Residues 345 to 535 form an interaction with HRD1 region; the sequence is QEYTESGPGF…VVRPLRNSFP (191 aa). Phosphoserine occurs at positions 374, 376, and 379. The required for ERAD-L function and HRD1 oligomer formation stretch occupies residues 437 to 490; sequence SSYLSVIKGDYGEIKIPISSNDYRINGDNILLSPSAIEQLESALNFKIERPRDS. A helical membrane pass occupies residues 537–559; that stretch reads LLVLIRTFYLIGYNSLVPFFIIL. Residues 560-563 lie on the Extracellular side of the membrane; it reads EFGS. The helical transmembrane segment at 564 to 583 threads the bilayer; it reads FLPWKYIILLSLLFIFRTVW. The Cytoplasmic portion of the chain corresponds to 584–838; it reads NTQEVWNLWR…QPHLYIPDED (255 aa). The interval 584-838 is interaction with DER1; that stretch reads NTQEVWNLWR…QPHLYIPDED (255 aa). A disordered region spans residues 795–838; it reads ARDREQPAPSAQQQENEDEALIIPDEEEPTATGAQPHLYIPDED. The span at 809–823 shows a compositional bias: acidic residues; that stretch reads ENEDEALIIPDEEEP.

Component of the HRD1 ubiquitin ligase complex which contains the E3 ligase HRD1, its cofactors HRD3, USA1 and DER1, substrate recruiting factor YOS9 and CDC48-binding protein UBX2. Within the complex, interacts directly with HRD1 (via N-terminus) and DER1 (via C-terminus) and indirectly with HRD3. In ERAD-L, HRD3 and YOS9 jointly bind misfolded glycoproteins in the endoplasmic reticulum (ER) lumen. Movement of ERAD-L substrates through the ER membrane is facilitated by HRD1 and DER1 which have lateral gates facing each other and which distort the membrane region between the lateral gates, making it much thinner than a normal phospholipid bilayer. Substrates insert into the membrane as a hairpin loop with one strand interacting with DER1 and the other with HRD1. The HRD1 complex interacts with the heterotrimeric CDC48-NPL4-UFD1 ATPase complex which is recruited by UBX2 via its interaction with CDC48 and which moves ubiquitinated substrates to the cytosol for targeting to the proteasome.

Its subcellular location is the endoplasmic reticulum membrane. In terms of biological role, scaffold protein of the endoplasmic reticulum-associated degradation (ERAD) (also known as endoplasmic reticulum quality control, ERQC) pathway involved in ubiquitin-dependent degradation of misfolded endoplasmic reticulum proteins. Component of the HRD1 ubiquitin ligase complex, which is part of the ERAD-L and ERAD-M pathways responsible for the rapid degradation of soluble lumenal and membrane proteins with misfolded lumenal domains (ERAD-L), or ER-membrane proteins with misfolded transmembrane domains (ERAD-M). Has multiple functions in ERAD including recruitment of DER1 to the HRD1 ubiquitin ligase, and regulation of HRD1 activity. Involved in oligomerization of HRD1 and in HRD1 autoubiquitination and degradation. The chain is U1 SNP1-associating protein 1 (USA1) from Saccharomyces cerevisiae (strain ATCC 204508 / S288c) (Baker's yeast).